The following is a 154-amino-acid chain: Ribonuclease H (154 aa).

One can recognise an RNase H type-1 domain in the interval 9 to 150 (SHPHIIIYTD…ADALANKGVE (142 aa)). Aspartate 18, glutamate 56, aspartate 78, and aspartate 142 together coordinate Mg(2+).

Belongs to the RNase H family. Monomer. Mg(2+) serves as cofactor.

The protein resides in the cytoplasm. It catalyses the reaction Endonucleolytic cleavage to 5'-phosphomonoester.. Functionally, endonuclease that specifically degrades the RNA of RNA-DNA hybrids. This is Ribonuclease H from Polynucleobacter asymbioticus (strain DSM 18221 / CIP 109841 / QLW-P1DMWA-1) (Polynucleobacter necessarius subsp. asymbioticus).